The sequence spans 112 residues: MEKMRRPVLIIFCLCLGWANGENQVEHSPHFLGPQQGDVASMSCTYSVSRFNNLQWYRQNTGMGPKHLLSMYSAGYEKQKGRLNATLLKNGSSLYITAVQPEDSATYFCAVD.

Positions 1–21 are cleaved as a signal peptide; that stretch reads MEKMRRPVLIIFCLCLGWANG. The region spanning 22 to 112 is the Ig-like domain; it reads ENQVEHSPHF…DSATYFCAVD (91 aa). Cysteine 44 and cysteine 109 form a disulfide bridge. Asparagine 84 and asparagine 90 each carry an N-linked (GlcNAc...) asparagine glycan.

Alpha-beta TR is a heterodimer composed of an alpha and beta chain; disulfide-linked. The alpha-beta TR is associated with the transmembrane signaling CD3 coreceptor proteins to form the TR-CD3 (TcR or TCR). The assembly of alpha-beta TR heterodimers with CD3 occurs in the endoplasmic reticulum where a single alpha-beta TR heterodimer associates with one CD3D-CD3E heterodimer, one CD3G-CD3E heterodimer and one CD247 homodimer forming a stable octameric structure. CD3D-CD3E and CD3G-CD3E heterodimers preferentially associate with TR alpha and TR beta chains, respectively. The association of the CD247 homodimer is the last step of TcR assembly in the endoplasmic reticulum and is required for transport to the cell surface.

Its subcellular location is the cell membrane. Its function is as follows. V region of the variable domain of T cell receptor (TR) alpha chain that participates in the antigen recognition. Alpha-beta T cell receptors are antigen specific receptors which are essential to the immune response and are present on the cell surface of T lymphocytes. Recognize peptide-major histocompatibility (MH) (pMH) complexes that are displayed by antigen presenting cells (APC), a prerequisite for efficient T cell adaptive immunity against pathogens. Binding of alpha-beta TR to pMH complex initiates TR-CD3 clustering on the cell surface and intracellular activation of LCK that phosphorylates the ITAM motifs of CD3G, CD3D, CD3E and CD247 enabling the recruitment of ZAP70. In turn ZAP70 phosphorylates LAT, which recruits numerous signaling molecules to form the LAT signalosome. The LAT signalosome propagates signal branching to three major signaling pathways, the calcium, the mitogen-activated protein kinase (MAPK) kinase and the nuclear factor NF-kappa-B (NF-kB) pathways, leading to the mobilization of transcription factors that are critical for gene expression and essential for T cell growth and differentiation. The T cell repertoire is generated in the thymus, by V-(D)-J rearrangement. This repertoire is then shaped by intrathymic selection events to generate a peripheral T cell pool of self-MH restricted, non-autoaggressive T cells. Post-thymic interaction of alpha-beta TR with the pMH complexes shapes TR structural and functional avidity. The polypeptide is T cell receptor alpha variable 7 (Homo sapiens (Human)).